We begin with the raw amino-acid sequence, 316 residues long: 4-diphosphocytidyl-2-C-methyl-D-erythritol kinase (316 aa).

Residue lysine 23 is part of the active site. Residue 108–118 participates in ATP binding; it reads PVAGGMAGGSA. The active site involves aspartate 150.

It belongs to the GHMP kinase family. IspE subfamily.

The enzyme catalyses 4-CDP-2-C-methyl-D-erythritol + ATP = 4-CDP-2-C-methyl-D-erythritol 2-phosphate + ADP + H(+). It participates in isoprenoid biosynthesis; isopentenyl diphosphate biosynthesis via DXP pathway; isopentenyl diphosphate from 1-deoxy-D-xylulose 5-phosphate: step 3/6. In terms of biological role, catalyzes the phosphorylation of the position 2 hydroxy group of 4-diphosphocytidyl-2C-methyl-D-erythritol. In Mycobacterium avium (strain 104), this protein is 4-diphosphocytidyl-2-C-methyl-D-erythritol kinase.